The following is a 1023-amino-acid chain: MFHLRTCAAKLRPLTASQTVKTFSQNKPAAIRTFQQIRCYSAPVAAEPFLSGTSSNYVEEMYCAWLENPKSVHKSWDIFFRNTNAGAPPGTAYQSPLSLSRSSLATMAHAQSLVEAQPNVDKLVEDHLAVQSLIRAYQIRGHHVAQLDPLGILDADLDSSVPADIISSTDKLGFYGLHESDLDKVFHLPTTTFIGGQEPALPLREIIRRLEMAYCQHIGVEFMFINDLEQCQWIRQKFETPGIMQFTNEEKRTLLARLVRSTRFEEFLQRKWSSEKRFGLEGCEVLIPALKTIIDMSSANGVDYVIMGMPHRGRLNVLANVIRKELEQIFCQFDSKLEAADEGSGDMKYHLGMYHRRINRVTDRNITLSLVANPSHLEAADPVVMGKTKAEQFYCGDTEGKKVMSILLHGDAAFAGQGIVYETFHLSDLPSYTTHGTVHVVVNNQIGFTTDPRMARSSPYPTDVARVVNAPIFHVNSDDPEAVMYVCKVAAEWRNTFHKDVVVDLVCYRRNGHNEMDEPMFTQPLMYKQIRKQKPVLQKYAELLVSQGVVNQPEYEEEISKYDKICEEAFTRSKDEKILHIKHWLDSPWPGFFTLDGQPRSMTCPSTGLEEDVLFHIGKVASSVPVENFTIHGGLSRILKTRRELVTNRTVDWALAEYMAFGSLLKEGIHVRLSGQDVERGTFSHRHHVLHDQNVDKRTCIPMNHLWPNQAPYTVCNSSLSEYGVLGFELGFAMASPNALVLWEAQFGDFNNMAQCIIDQFICPGQAKWVRQNGIVLLLPHGMEGMGPEHSSARPERFLQMCNDDPDVLPDLQEENFDINQLYDCNWIVVNCSTPGNFFHVLRRQILLPFRKPLIVFTPKSLLRHPEARTSFDEMLPGTHFQRVIPENGPAAQDPHKVKRLLFCTGKVYYDLTRERKARNMEEEVAITRIEQLSPFPFDLLLKEAQKYPNAELAWCQEEHKNQGYYDYVKPRLRTTIDRAKPVWYAGRDPAAAPATGNKKTHLTELQRFLDTAFDLDAFKKFS.

The N-terminal 40 residues, 1 to 40, are a transit peptide targeting the mitochondrion; that stretch reads MFHLRTCAAKLRPLTASQTVKTFSQNKPAAIRTFQQIRCY. N6-succinyllysine is present on K74. S100 bears the Phosphoserine mark. Ca(2+) is bound by residues H143, D156, and D158. Residue R312 participates in thiamine diphosphate binding. K401 bears the N6-acetyllysine mark. Thiamine diphosphate is bound by residues D411, N444, and I446. Mg(2+)-binding residues include D411, N444, and I446. Residue K534 forms a Glycyl lysine isopeptide (Lys-Gly) (interchain with G-Cter in ubiquitin) linkage. Residue K564 is modified to N6-succinyllysine. Q676 contributes to the thiamine diphosphate binding site. A recognized by alloreactive CD8 cytotoxic T-lymphocytes in association with a class I MHC protein region spans residues 933 to 939; that stretch reads LSPFPFD. The residue at position 970 (K970) is an N6-acetyllysine.

This sequence belongs to the alpha-ketoglutarate dehydrogenase family. Homodimer. The 2-oxoglutarate dehydrogenase complex is composed of OGDH (2-oxoglutarate dehydrogenase; E1), DLST (dihydrolipoamide succinyltransferase; E2), DLD (dihydrolipoamide dehydrogenase; E3) and the assembly factor KGD4. It contains multiple copies of the three enzymatic components (E1, E2 and E3). In the nucleus, the 2-oxoglutarate dehydrogenase complex associates with KAT2A. Interacts with ABHD11; this interaction maintains the functional lipoylation of the 2-oxoglutarate dehydrogenase complex. Requires thiamine diphosphate as cofactor. It depends on Mg(2+) as a cofactor.

It is found in the mitochondrion. Its subcellular location is the nucleus. It catalyses the reaction N(6)-[(R)-lipoyl]-L-lysyl-[protein] + 2-oxoglutarate + H(+) = N(6)-[(R)-S(8)-succinyldihydrolipoyl]-L-lysyl-[protein] + CO2. Its activity is regulated as follows. Calcium ions and ADP stimulate, whereas ATP and NADH reduce catalytic activity. Its function is as follows. 2-oxoglutarate dehydrogenase (E1o) component of the 2-oxoglutarate dehydrogenase complex (OGDHC). Participates in the first step, rate limiting for the overall conversion of 2-oxoglutarate to succinyl-CoA and CO(2) catalyzed by the whole OGDHC. Catalyzes the irreversible decarboxylation of 2-oxoglutarate (alpha-ketoglutarate) via the thiamine diphosphate (ThDP) cofactor and subsequent transfer of the decarboxylated acyl intermediate on an oxidized dihydrolipoyl group that is covalently amidated to the E2 enzyme (dihydrolipoyllysine-residue succinyltransferase or DLST). Plays a key role in the Krebs (citric acid) cycle, which is a common pathway for oxidation of fuel molecules, including carbohydrates, fatty acids, and amino acids. Can catalyze the decarboxylation of 2-oxoadipate in vitro, but at a much lower rate than 2-oxoglutarate. Mainly active in the mitochondrion. A fraction of the 2-oxoglutarate dehydrogenase complex also localizes in the nucleus and is required for lysine succinylation of histones: associates with KAT2A on chromatin and provides succinyl-CoA to histone succinyltransferase KAT2A. The polypeptide is 2-oxoglutarate dehydrogenase complex component E1 (Mus musculus (Mouse)).